The primary structure comprises 48 residues: NLVQFKTLIMKIAGRSVVYKYFYYGCYCGWGGIGQPRDATDRCCFVHD.

The Ca(2+) site is built by Tyr-27, Gly-29, and Gly-31. A disulfide bridge links Cys-28 with Cys-44. The active site involves His-47. Asp-48 contacts Ca(2+).

It belongs to the phospholipase A2 family. Group II subfamily. D49 sub-subfamily. In terms of assembly, monomer. Requires Ca(2+) as cofactor. As to expression, expressed by the venom gland.

The protein localises to the secreted. It catalyses the reaction a 1,2-diacyl-sn-glycero-3-phosphocholine + H2O = a 1-acyl-sn-glycero-3-phosphocholine + a fatty acid + H(+). Its activity is regulated as follows. Inhibited by EDTA. Inhibited by Ba(2+), Cu(+), Fe(2+) and Zn(2+) ions and, to a lesser extent, by Mn(2+) and Mg(2+) ions. Its function is as follows. Snake venom phospholipase A2 (PLA2) that shows myotoxicity and induces paw edema in mice. Exhibits indirect hemolytic activity. Inhibits platelet aggregation induced by ADP and collagen. PLA2 catalyzes the calcium-dependent hydrolysis of the 2-acyl groups in 3-sn-phosphoglycerides. In Bothrops pauloensis (Neuwied's lancehead), this protein is Acidic phospholipase A2.